The primary structure comprises 260 residues: Dolichol-phosphate mannosyltransferase subunit 1 (260 aa).

Ala-2 is modified (N-acetylalanine). A phosphoserine mark is found at Ser-3 and Ser-9. Pro-32, Tyr-34, Glu-36, Ile-63, Asp-65, Asp-118, Ala-119, Asp-120, Arg-147, Arg-234, and Lys-240 together coordinate GDP-alpha-D-mannose. Asp-120 serves as a coordination point for Mg(2+). Asp-120 is a Mn(2+) binding site.

Belongs to the glycosyltransferase 2 family. In terms of assembly, component of the dolichol-phosphate mannose (DPM) synthase complex composed of DPM1, DPM2 and DPM3; within the complex, directly interacts with DPM3. This interaction stabilizes DPM1. Mg(2+) serves as cofactor. It depends on Mn(2+) as a cofactor. The cofactor is Ca(2+).

Its subcellular location is the endoplasmic reticulum. The catalysed reaction is a di-trans,poly-cis-dolichyl phosphate + GDP-alpha-D-mannose = a di-trans,poly-cis-dolichyl beta-D-mannosyl phosphate + GDP. It functions in the pathway protein modification; protein glycosylation. Its function is as follows. Transfers mannose from GDP-mannose to dolichol monophosphate to form dolichol phosphate mannose (Dol-P-Man) which is the mannosyl donor in pathways leading to N-glycosylation, glycosyl phosphatidylinositol membrane anchoring, and O-mannosylation of proteins; catalytic subunit of the dolichol-phosphate mannose (DPM) synthase complex. In Homo sapiens (Human), this protein is Dolichol-phosphate mannosyltransferase subunit 1 (DPM1).